The primary structure comprises 161 residues: MNPRRKKRLTLAIALIGGVAAIASLLLYALNSNLNLFYTPSEIVNGKADTGVKPEAGQRIRVGGMVTVGSMVRDPNSLHVQFAVHDSLGGEIMVTYDDLLPDLFREGQGIVAQGVLGEDGKLAATEVLAKHDENYMPPEVAEAMGQKHEKLDYSQQKSAAQ.

Residues 1 to 8 (MNPRRKKR) lie on the Cytoplasmic side of the membrane. The chain crosses the membrane as a helical; Signal-anchor for type II membrane protein span at residues 9-29 (LTLAIALIGGVAAIASLLLYA). At 30-161 (LNSNLNLFYT…DYSQQKSAAQ (132 aa)) the chain is on the periplasmic side. Residues histidine 131 and tyrosine 135 each contribute to the heme site. Residues 138–161 (PEVAEAMGQKHEKLDYSQQKSAAQ) are disordered.

It belongs to the CcmE/CycJ family.

Its subcellular location is the cell inner membrane. Functionally, heme chaperone required for the biogenesis of c-type cytochromes. Transiently binds heme delivered by CcmC and transfers the heme to apo-cytochromes in a process facilitated by CcmF and CcmH. The polypeptide is Cytochrome c-type biogenesis protein CcmE (Shewanella sp. (strain MR-4)).